Consider the following 286-residue polypeptide: Fructose-bisphosphate aldolase (286 aa).

Ser-50 lines the D-glyceraldehyde 3-phosphate pocket. Catalysis depends on Asp-85, which acts as the Proton donor. His-86, Asp-107, Glu-137, and His-181 together coordinate Zn(2+). Dihydroxyacetone phosphate is bound at residue Gly-182. His-209 provides a ligand contact to Zn(2+). Dihydroxyacetone phosphate contacts are provided by residues 210-212 and 231-234; these read GGT and NVNT.

Belongs to the class II fructose-bisphosphate aldolase family. Zn(2+) is required as a cofactor.

The catalysed reaction is beta-D-fructose 1,6-bisphosphate = D-glyceraldehyde 3-phosphate + dihydroxyacetone phosphate. The protein operates within carbohydrate degradation; glycolysis; D-glyceraldehyde 3-phosphate and glycerone phosphate from D-glucose: step 4/4. Its function is as follows. Catalyzes the aldol condensation of dihydroxyacetone phosphate (DHAP or glycerone-phosphate) with glyceraldehyde 3-phosphate (G3P) to form fructose 1,6-bisphosphate (FBP) in gluconeogenesis and the reverse reaction in glycolysis. The chain is Fructose-bisphosphate aldolase (fba) from Staphylococcus epidermidis (strain ATCC 35984 / DSM 28319 / BCRC 17069 / CCUG 31568 / BM 3577 / RP62A).